We begin with the raw amino-acid sequence, 185 residues long: Ribosome-recycling factor (185 aa).

The protein belongs to the RRF family.

The protein resides in the cytoplasm. Responsible for the release of ribosomes from messenger RNA at the termination of protein biosynthesis. May increase the efficiency of translation by recycling ribosomes from one round of translation to another. In Thermosipho melanesiensis (strain DSM 12029 / CIP 104789 / BI429), this protein is Ribosome-recycling factor.